The chain runs to 555 residues: Membrane protein insertase YidC (555 aa).

Residues 7 to 24 (ILWVIFSMSLVLLYDNWQ) form a helical membrane-spanning segment. Positions 62–81 (APGAAGTAAPAAPQAAAQPT) are disordered. The next 5 membrane-spanning stretches (helical) occupy residues 334 to 354 (LELVKDYGWLTILAKPLFWLL), 360 to 380 (FLGNWGWSIIALTVLIKLVFF), 430 to 450 (LGGCLPIVIQIPVFIALYWVL), 468 to 488 (LSVPDPFYILPIVMAVSMFVQ), and 503 to 523 (VMMIMPLVFSVMFFFFPAGLV).

Belongs to the OXA1/ALB3/YidC family. Type 1 subfamily. As to quaternary structure, interacts with the Sec translocase complex via SecD. Specifically interacts with transmembrane segments of nascent integral membrane proteins during membrane integration.

Its subcellular location is the cell inner membrane. Its function is as follows. Required for the insertion and/or proper folding and/or complex formation of integral membrane proteins into the membrane. Involved in integration of membrane proteins that insert both dependently and independently of the Sec translocase complex, as well as at least some lipoproteins. Aids folding of multispanning membrane proteins. This Cupriavidus necator (strain ATCC 17699 / DSM 428 / KCTC 22496 / NCIMB 10442 / H16 / Stanier 337) (Ralstonia eutropha) protein is Membrane protein insertase YidC.